The sequence spans 295 residues: Thioredoxin-related transmembrane protein 2 (295 aa).

An N-terminal signal peptide occupies residues 1–48 (MAVLAPLIALVYSVPRLSRWLARPYCLLSALLSIAFLLVRKLPPICNG). Residues 49–102 (LPTQREDGNPCDFDWREVEILMFLSAIVMMKNRRSITVEQHVGNIFMFSKVANA) are Extracellular-facing. A helical membrane pass occupies residues 103 to 125 (ILFFRLDIRMGLLYLTLCIVFLM). A Thioredoxin domain is found at 114–269 (LLYLTLCIVF…LYQRAKKLSK (156 aa)). Topologically, residues 126-295 (TCKPPLYMGP…VPDGENKKDK (170 aa)) are cytoplasmic. Phosphoserine is present on residues Ser-211 and Ser-243. Positions 266–295 (KLSKGGDMSEEKPGNPTPTAVPDGENKKDK) are disordered. A Di-lysine motif motif is present at residues 292–295 (KKDK).

As to quaternary structure, monomer. Homodimer; disulfide-linked. Occurs in both reduced and oxidized monomeric form. Oxidative conditions increase homodimerization. Interacts with CANX. Interacts with ATP2A2.

Its subcellular location is the endoplasmic reticulum membrane. It localises to the mitochondrion membrane. Its function is as follows. Endoplasmic reticulum and mitochondria-associated protein that probably functions as a regulator of cellular redox state and thereby regulates protein post-translational modification, protein folding and mitochondrial activity. Indirectly regulates neuronal proliferation, migration, and organization in the developing brain. The chain is Thioredoxin-related transmembrane protein 2 (Tmx2) from Rattus norvegicus (Rat).